A 486-amino-acid chain; its full sequence is Ribulose bisphosphate carboxylase large chain (486 aa).

Substrate-binding residues include Asn125 and Thr175. Lys177 serves as the catalytic Proton acceptor. Lys179 contributes to the substrate binding site. The Mg(2+) site is built by Lys203, Asp205, and Glu206. Lys203 carries the N6-carboxylysine modification. The active-site Proton acceptor is His295. Residues Arg296, His328, and Ser380 each coordinate substrate.

This sequence belongs to the RuBisCO large chain family. Type I subfamily. As to quaternary structure, heterohexadecamer of 8 large chains and 8 small chains. Mg(2+) serves as cofactor.

The catalysed reaction is 2 (2R)-3-phosphoglycerate + 2 H(+) = D-ribulose 1,5-bisphosphate + CO2 + H2O. It catalyses the reaction D-ribulose 1,5-bisphosphate + O2 = 2-phosphoglycolate + (2R)-3-phosphoglycerate + 2 H(+). In terms of biological role, ruBisCO catalyzes two reactions: the carboxylation of D-ribulose 1,5-bisphosphate, the primary event in carbon dioxide fixation, as well as the oxidative fragmentation of the pentose substrate. Both reactions occur simultaneously and in competition at the same active site. This Aurantimonas manganoxydans (strain ATCC BAA-1229 / DSM 21871 / SI85-9A1) protein is Ribulose bisphosphate carboxylase large chain.